Here is a 410-residue protein sequence, read N- to C-terminus: Multifunctional CCA protein (410 aa).

2 residues coordinate ATP: Gly-8 and Arg-11. 2 residues coordinate CTP: Gly-8 and Arg-11. 2 residues coordinate Mg(2+): Glu-21 and Asp-23. Residues Arg-91, Arg-137, and Arg-140 each coordinate ATP. CTP-binding residues include Arg-91, Arg-137, and Arg-140. The 102-residue stretch at 228–329 (TGIHSLMALR…VKLLEQVDAF (102 aa)) folds into the HD domain.

The protein belongs to the tRNA nucleotidyltransferase/poly(A) polymerase family. Bacterial CCA-adding enzyme type 1 subfamily. As to quaternary structure, monomer. Can also form homodimers and oligomers. Mg(2+) is required as a cofactor. Ni(2+) serves as cofactor.

The enzyme catalyses a tRNA precursor + 2 CTP + ATP = a tRNA with a 3' CCA end + 3 diphosphate. It catalyses the reaction a tRNA with a 3' CCA end + 2 CTP + ATP = a tRNA with a 3' CCACCA end + 3 diphosphate. In terms of biological role, catalyzes the addition and repair of the essential 3'-terminal CCA sequence in tRNAs without using a nucleic acid template. Adds these three nucleotides in the order of C, C, and A to the tRNA nucleotide-73, using CTP and ATP as substrates and producing inorganic pyrophosphate. tRNA 3'-terminal CCA addition is required both for tRNA processing and repair. Also involved in tRNA surveillance by mediating tandem CCA addition to generate a CCACCA at the 3' terminus of unstable tRNAs. While stable tRNAs receive only 3'-terminal CCA, unstable tRNAs are marked with CCACCA and rapidly degraded. This Legionella pneumophila (strain Paris) protein is Multifunctional CCA protein.